A 962-amino-acid polypeptide reads, in one-letter code: MQQDYNSSNIEQKWQQKWNESKVFEAEADDRDKYFITIPYPYLNGNLHAGHTRTFTIGDVVARYKRMMGNNVLYPMGFHVTGTPIVGLAELIQNRDPETMKVYTEFHGIPVETLKGMDTPEKIVDYFSVEAERSMRSIGYSIDWRRKFTTTDPNYKKFIEWQFNLLYEKDLIVKGSHPVKWCPNDDNPVEDHDILHGEEATIIDYTLVKFKYDGMIIPCATLRPETVFGVTNLWINPDLEHVKIKVTFEGREEVWVVSKEAYRKLIFTDREVEFIEDVDASSLIGIKVTNPLNDAQVITLPASFVKGENGSGIVMSVPSHAPYDYLALRDLYDKDLREYGITEDLRELKFISLIKVKEFGEFPAIEAVEQFGVKDQDDPKAEEATKIVYRREFHGGVLKENTGKYSGMAVSKIKDVLTRDLIEMGIGEVFYEFSEPVVCRCGTPCVVNMVKGQWFLNYSNPEWKDKVYRCIENMDIIPEDLRVEFNNKVDWLKDKACARKKGLGTLLPFDNQWLIESLGDSTIYMSYYIIAKFIAMGIETEQLVPELFDHVLLKKCSLETAAERSGIDANIIEQISSDFEYWYPVDLRSSGKDLIPNHLLFFLFHHVAIFDEDKWPRAIAINGFVSLEGKKMSKSKGPLLTLNDAITNYGADISRMYILSSAEQMQDADWKNSGIETARKQIERFYNFSKDIIGSGIPTCNVENLKGIDKWMLSRLQQRILETNEALDTIRTRNALQNAYFLLFNDIRWYQKRGGNALLCEVLDVWIRLMAPFTPHICEEIWEAIGHTDNDLISLADYPQYDESLVDTQAEFTEELIGGTLSDVDEIIRVTKLTPKKAILYTSPEWKMETFKKALSMQKEGNLNPGILIKDLMRDPEMRSHGKEVPKFAQKVVSDITAMNEEKFDTLSNFDLDEKIALEENLEFFKNELGCSVEIYSADNAEYDPENKARFAYPLRPAIYLE.

Residues 41–51 (PYLNGNLHAGH) carry the 'HIGH' region motif. Positions 631–635 (KMSKS) match the 'KMSKS' region motif. K634 contacts ATP.

It belongs to the class-I aminoacyl-tRNA synthetase family.

It localises to the cytoplasm. It carries out the reaction tRNA(Leu) + L-leucine + ATP = L-leucyl-tRNA(Leu) + AMP + diphosphate. This is Leucine--tRNA ligase from Methanococcoides burtonii (strain DSM 6242 / NBRC 107633 / OCM 468 / ACE-M).